The sequence spans 187 residues: GTP cyclohydrolase 1 (187 aa).

Zn(2+)-binding residues include Cys-81, His-84, and Cys-152.

This sequence belongs to the GTP cyclohydrolase I family. Homomer.

The catalysed reaction is GTP + H2O = 7,8-dihydroneopterin 3'-triphosphate + formate + H(+). The protein operates within cofactor biosynthesis; 7,8-dihydroneopterin triphosphate biosynthesis; 7,8-dihydroneopterin triphosphate from GTP: step 1/1. The protein is GTP cyclohydrolase 1 of Pyrobaculum neutrophilum (strain DSM 2338 / JCM 9278 / NBRC 100436 / V24Sta) (Thermoproteus neutrophilus).